A 331-amino-acid polypeptide reads, in one-letter code: Pyruvate dehydrogenase E1 component subunit beta (331 aa).

Glutamate 60 contributes to the thiamine diphosphate binding site. The K(+) site is built by leucine 113, alanine 161, isoleucine 162, aspartate 164, and asparagine 166.

Heterodimer of an alpha and a beta chain. Requires thiamine diphosphate as cofactor.

The protein localises to the plastid. It localises to the chloroplast. The enzyme catalyses N(6)-[(R)-lipoyl]-L-lysyl-[protein] + pyruvate + H(+) = N(6)-[(R)-S(8)-acetyldihydrolipoyl]-L-lysyl-[protein] + CO2. Its function is as follows. The pyruvate dehydrogenase complex catalyzes the overall conversion of pyruvate to acetyl-CoA and CO(2). It contains multiple copies of three enzymatic components: pyruvate dehydrogenase (E1), dihydrolipoamide acetyltransferase (E2) and lipoamide dehydrogenase (E3). In Porphyra purpurea (Red seaweed), this protein is Pyruvate dehydrogenase E1 component subunit beta (pdhB).